The chain runs to 333 residues: Flotillin-like protein FloA (333 aa).

The helical transmembrane segment at 10-30 (IFLIAGGIIFLVLFFHYVPFF) threads the bilayer.

Belongs to the flotillin-like FloA family. Homooligomerizes.

It localises to the cell membrane. The protein localises to the membrane raft. Found in functional membrane microdomains (FMM) that may be equivalent to eukaryotic membrane rafts. FMMs are highly dynamic and increase in number as cells age. Flotillins are thought to be important factors in membrane fluidity. The polypeptide is Flotillin-like protein FloA (Bacteroides fragilis (strain ATCC 25285 / DSM 2151 / CCUG 4856 / JCM 11019 / LMG 10263 / NCTC 9343 / Onslow / VPI 2553 / EN-2)).